We begin with the raw amino-acid sequence, 297 residues long: MITFLSGGTGTPKLLEGARNMLPDSDISVIVNTGEDIWYQGGHISPDVDTVMYLFAGLLNTDTWWGVRGDSFLTHDVLKTLLPASYMSIGDKDRAVHIARAEWLKKGMTLTRVTQQLCSHFGVSTTILPMSDSPYTTYVRTAKGDIHFQEYWVRYRGNTDICAVLHVPDEQPPATPEVIDAIRKAEVVIIGPSNPVTSILPILSCTGVREELAQKKVIAISPFIGEGPVSGPAAQLMKTMKYPADSTGVRALYADLVDVFIQDERDTAQVPGSVRLDTLMKTPAIAERLMREILTRL.

Position 49 (Asp-49) interacts with 7,8-didemethyl-8-hydroxy-5-deazariboflavin.

Belongs to the CofD family. Homodimer. Requires Mg(2+) as cofactor.

The enzyme catalyses (2S)-lactyl-2-diphospho-5'-guanosine + 7,8-didemethyl-8-hydroxy-5-deazariboflavin = oxidized coenzyme F420-0 + GMP + H(+). The protein operates within cofactor biosynthesis; coenzyme F420 biosynthesis. Its function is as follows. Catalyzes the transfer of the 2-phospholactate moiety from (2S)-lactyl-2-diphospho-5'-guanosine to 7,8-didemethyl-8-hydroxy-5-deazariboflavin (FO) with the formation of oxidized coenzyme F420-0 and GMP. The chain is 2-phospho-L-lactate transferase from Methanospirillum hungatei JF-1 (strain ATCC 27890 / DSM 864 / NBRC 100397 / JF-1).